Reading from the N-terminus, the 123-residue chain is Small ribosomal subunit protein eS25 (123 aa).

Residues 1 to 13 are compositionally biased toward basic and acidic residues; sequence MPPKKDTKGDSKK. The interval 1–34 is disordered; it reads MPPKKDTKGDSKKGQKAKAGSGGGKAKKKKWSKG. Over residues 25–34 the composition is skewed to basic residues; that stretch reads KAKKKKWSKG.

Belongs to the eukaryotic ribosomal protein eS25 family.

In Branchiostoma belcheri (Amphioxus), this protein is Small ribosomal subunit protein eS25 (RPS25).